Reading from the N-terminus, the 130-residue chain is Histone H2A type 1-B/E (130 aa).

Residues 1-22 form a disordered region; that stretch reads MSGRGKQGGKARAKAKTRSSRA. S2 bears the N-acetylserine mark. Residue S2 is modified to Phosphoserine; by RPS6KA5. Citrulline; alternate is present on R4. A Symmetric dimethylarginine; by PRMT5; alternate modification is found at R4. N6-(2-hydroxyisobutyryl)lysine; alternate occurs at positions 6 and 10. K6 is modified (N6-acetyllysine; alternate). Residues 7–19 show a composition bias toward basic residues; it reads QGGKARAKAKTRS. N6-(beta-hydroxybutyryl)lysine; alternate occurs at positions 10 and 14. An N6-lactoyllysine; alternate modification is found at K10. K10 is modified (N6-succinyllysine; alternate). K14 participates in a covalent cross-link: Glycyl lysine isopeptide (Lys-Gly) (interchain with G-Cter in ubiquitin); alternate. K16 is covalently cross-linked (Glycyl lysine isopeptide (Lys-Gly) (interchain with G-Cter in ubiquitin)). At K37 the chain carries N6-(2-hydroxyisobutyryl)lysine; alternate. An N6-(beta-hydroxybutyryl)lysine; alternate modification is found at K37. Residue K37 is modified to N6-crotonyllysine; alternate. Residues K75 and K76 each carry the N6-(2-hydroxyisobutyryl)lysine modification. K96 is subject to N6-(2-hydroxyisobutyryl)lysine; alternate. The residue at position 96 (K96) is an N6-(beta-hydroxybutyryl)lysine; alternate. At K96 the chain carries N6-succinyllysine; alternate. K96 carries the N6-glutaryllysine; alternate modification. Q105 carries the N5-methylglutamine modification. K119 carries the N6-(2-hydroxyisobutyryl)lysine; alternate modification. At K119 the chain carries N6-(beta-hydroxybutyryl)lysine; alternate. N6-crotonyllysine; alternate is present on residues K119 and K120. K119 and K120 each carry N6-glutaryllysine; alternate. K120 participates in a covalent cross-link: Glycyl lysine isopeptide (Lys-Gly) (interchain with G-Cter in ubiquitin); alternate. Residue T121 is modified to Phosphothreonine; by DCAF1. Position 126 is an N6-crotonyllysine; alternate (K126). K126 is modified (N6-glutaryllysine; alternate).

The protein belongs to the histone H2A family. As to quaternary structure, the nucleosome is a histone octamer containing two molecules each of H2A, H2B, H3 and H4 assembled in one H3-H4 heterotetramer and two H2A-H2B heterodimers. The octamer wraps approximately 147 bp of DNA. In terms of processing, deiminated on Arg-4 in granulocytes upon calcium entry. Post-translationally, monoubiquitination of Lys-120 (H2AK119Ub) by RING1, TRIM37 and RNF2/RING2 complex gives a specific tag for epigenetic transcriptional repression and participates in X chromosome inactivation of female mammals. It is involved in the initiation of both imprinted and random X inactivation. Ubiquitinated H2A is enriched in inactive X chromosome chromatin. Ubiquitination of H2A functions downstream of methylation of 'Lys-27' of histone H3 (H3K27me). H2AK119Ub by RNF2/RING2 can also be induced by ultraviolet and may be involved in DNA repair. Monoubiquitination of Lys-120 (H2AK119Ub) by TRIM37 may promote transformation of cells in a number of breast cancers. Following DNA double-strand breaks (DSBs), it is ubiquitinated through 'Lys-63' linkage of ubiquitin moieties by the E2 ligase UBE2N and the E3 ligases RNF8 and RNF168, leading to the recruitment of repair proteins to sites of DNA damage. Ubiquitination at Lys-14 and Lys-16 (H2AK13Ub and H2AK15Ub, respectively) in response to DNA damage is initiated by RNF168 that mediates monoubiquitination at these 2 sites, and 'Lys-63'-linked ubiquitin are then conjugated to monoubiquitin; RNF8 is able to extend 'Lys-63'-linked ubiquitin chains in vitro. Deubiquitinated by USP51 at Lys-14 and Lys-16 (H2AK13Ub and H2AK15Ub, respectively) after damaged DNA is repaired. H2AK119Ub and ionizing radiation-induced 'Lys-63'-linked ubiquitination (H2AK13Ub and H2AK15Ub) are distinct events. Phosphorylation on Ser-2 (H2AS1ph) is enhanced during mitosis. Phosphorylation on Ser-2 by RPS6KA5/MSK1 directly represses transcription. Acetylation of H3 inhibits Ser-2 phosphorylation by RPS6KA5/MSK1. Phosphorylation at Thr-121 (H2AT120ph) by DCAF1 is present in the regulatory region of many tumor suppresor genes and down-regulates their transcription. In terms of processing, glutamine methylation at Gln-105 (H2AQ104me) by FBL is specifically dedicated to polymerase I. It is present at 35S ribosomal DNA locus and impairs binding of the FACT complex. Post-translationally, symmetric dimethylation on Arg-4 by the PRDM1/PRMT5 complex may play a crucial role in the germ-cell lineage. Crotonylation (Kcr) is specifically present in male germ cells and marks testis-specific genes in post-meiotic cells, including X-linked genes that escape sex chromosome inactivation in haploid cells. Crotonylation marks active promoters and enhancers and confers resistance to transcriptional repressors. It is also associated with post-meiotically activated genes on autosomes. In terms of processing, lactylated in macrophages by EP300/P300 by using lactoyl-CoA directly derived from endogenous or exogenous lactate, leading to stimulates gene transcription.

Its subcellular location is the nucleus. It is found in the chromosome. Functionally, core component of nucleosome. Nucleosomes wrap and compact DNA into chromatin, limiting DNA accessibility to the cellular machineries which require DNA as a template. Histones thereby play a central role in transcription regulation, DNA repair, DNA replication and chromosomal stability. DNA accessibility is regulated via a complex set of post-translational modifications of histones, also called histone code, and nucleosome remodeling. This chain is Histone H2A type 1-B/E, found in Homo sapiens (Human).